Consider the following 569-residue polypeptide: RNA demethylase ALKBH10B (569 aa).

Residues 118 to 151 (QKVAAKKAEDLKQKKTEEEAEEDLKEVVATEEEE) are a coiled coil. The tract at residues 164–190 (ENDVNGDVEDVEDDSPTSDITDSGSHQ) is disordered. Residues 167 to 179 (VNGDVEDVEDDSP) are compositionally biased toward acidic residues. Positions 180–189 (TSDITDSGSH) are enriched in polar residues. His366, Glu368, and His421 together coordinate Fe cation. 2-oxoglutarate is bound at residue Arg430. Basic residues predominate over residues 531-545 (KHVKHLPPRAQKKRL). The disordered stretch occupies residues 531–569 (KHVKHLPPRAQKKRLLPLPPAASSSPAGGSTSEPVITVG). Residues 551-560 (AASSSPAGGS) are compositionally biased toward low complexity.

This sequence belongs to the alkB family. Fe(2+) is required as a cofactor.

It catalyses the reaction an N(6)-methyladenosine in mRNA + 2-oxoglutarate + O2 = an adenosine in mRNA + formaldehyde + succinate + CO2. Functionally, dioxygenase that demethylates RNA by oxidative demethylation: specifically demethylates N(6)-methyladenosine (m6A) RNA, the most prevalent internal modification of messenger RNA (mRNA) in higher eukaryotes. ALKBH10B-mediated mRNA m6A demethylation stabilizes the mRNA of the key flowering time regulators FT, SPL3 and SPL9, which are involved in the control of floral transition. This Arabidopsis thaliana (Mouse-ear cress) protein is RNA demethylase ALKBH10B.